Reading from the N-terminus, the 557-residue chain is Dihydroxy-acid dehydratase (557 aa).

Aspartate 78 is a binding site for Mg(2+). Cysteine 119 is a [2Fe-2S] cluster binding site. The Mg(2+) site is built by aspartate 120 and lysine 121. The residue at position 121 (lysine 121) is an N6-carboxylysine. Cysteine 192 lines the [2Fe-2S] cluster pocket. Glutamate 442 serves as a coordination point for Mg(2+). Serine 468 serves as the catalytic Proton acceptor.

It belongs to the IlvD/Edd family. As to quaternary structure, homodimer. [2Fe-2S] cluster serves as cofactor. The cofactor is Mg(2+).

The catalysed reaction is (2R)-2,3-dihydroxy-3-methylbutanoate = 3-methyl-2-oxobutanoate + H2O. The enzyme catalyses (2R,3R)-2,3-dihydroxy-3-methylpentanoate = (S)-3-methyl-2-oxopentanoate + H2O. It functions in the pathway amino-acid biosynthesis; L-isoleucine biosynthesis; L-isoleucine from 2-oxobutanoate: step 3/4. Its pathway is amino-acid biosynthesis; L-valine biosynthesis; L-valine from pyruvate: step 3/4. Functionally, functions in the biosynthesis of branched-chain amino acids. Catalyzes the dehydration of (2R,3R)-2,3-dihydroxy-3-methylpentanoate (2,3-dihydroxy-3-methylvalerate) into 2-oxo-3-methylpentanoate (2-oxo-3-methylvalerate) and of (2R)-2,3-dihydroxy-3-methylbutanoate (2,3-dihydroxyisovalerate) into 2-oxo-3-methylbutanoate (2-oxoisovalerate), the penultimate precursor to L-isoleucine and L-valine, respectively. This Bacillus cereus (strain G9842) protein is Dihydroxy-acid dehydratase.